The sequence spans 911 residues: Protein translocase subunit SecA (911 aa).

ATP is bound by residues glutamine 87, 105–109, and aspartate 513; that span reads GEGKT. Residues 853-911 form a disordered region; sequence IQLQHEQVSGLEPEAGEAPSAGEPRSEQPYVRAGRKVGRNDPCPCGSGKKFKACHGKLG. Positions 862 to 875 are enriched in low complexity; sequence GLEPEAGEAPSAGE. Zn(2+)-binding residues include cysteine 895, cysteine 897, cysteine 906, and histidine 907. Residues 901–911 show a composition bias toward basic residues; the sequence is KKFKACHGKLG.

It belongs to the SecA family. In terms of assembly, monomer and homodimer. Part of the essential Sec protein translocation apparatus which comprises SecA, SecYEG and auxiliary proteins SecDF-YajC and YidC. Zn(2+) is required as a cofactor.

It localises to the cell inner membrane. The protein localises to the cytoplasm. It catalyses the reaction ATP + H2O + cellular proteinSide 1 = ADP + phosphate + cellular proteinSide 2.. Its function is as follows. Part of the Sec protein translocase complex. Interacts with the SecYEG preprotein conducting channel. Has a central role in coupling the hydrolysis of ATP to the transfer of proteins into and across the cell membrane, serving both as a receptor for the preprotein-SecB complex and as an ATP-driven molecular motor driving the stepwise translocation of polypeptide chains across the membrane. The protein is Protein translocase subunit SecA of Teredinibacter turnerae (strain ATCC 39867 / T7901).